The sequence spans 83 residues: Large ribosomal subunit protein bL27 (83 aa).

It belongs to the bacterial ribosomal protein bL27 family.

In Thermotoga maritima (strain ATCC 43589 / DSM 3109 / JCM 10099 / NBRC 100826 / MSB8), this protein is Large ribosomal subunit protein bL27 (rpmA).